The following is a 262-amino-acid chain: Phosphatidylserine decarboxylase proenzyme (262 aa).

Active-site charge relay system; for autoendoproteolytic cleavage activity residues include aspartate 86, histidine 142, and serine 226. The active-site Schiff-base intermediate with substrate; via pyruvic acid; for decarboxylase activity is serine 226. Serine 226 carries the post-translational modification Pyruvic acid (Ser); by autocatalysis.

The protein belongs to the phosphatidylserine decarboxylase family. PSD-B subfamily. Prokaryotic type I sub-subfamily. In terms of assembly, heterodimer of a large membrane-associated beta subunit and a small pyruvoyl-containing alpha subunit. It depends on pyruvate as a cofactor. In terms of processing, is synthesized initially as an inactive proenzyme. Formation of the active enzyme involves a self-maturation process in which the active site pyruvoyl group is generated from an internal serine residue via an autocatalytic post-translational modification. Two non-identical subunits are generated from the proenzyme in this reaction, and the pyruvate is formed at the N-terminus of the alpha chain, which is derived from the carboxyl end of the proenzyme. The autoendoproteolytic cleavage occurs by a canonical serine protease mechanism, in which the side chain hydroxyl group of the serine supplies its oxygen atom to form the C-terminus of the beta chain, while the remainder of the serine residue undergoes an oxidative deamination to produce ammonia and the pyruvoyl prosthetic group on the alpha chain. During this reaction, the Ser that is part of the protease active site of the proenzyme becomes the pyruvoyl prosthetic group, which constitutes an essential element of the active site of the mature decarboxylase.

It is found in the cell membrane. The catalysed reaction is a 1,2-diacyl-sn-glycero-3-phospho-L-serine + H(+) = a 1,2-diacyl-sn-glycero-3-phosphoethanolamine + CO2. It functions in the pathway phospholipid metabolism; phosphatidylethanolamine biosynthesis; phosphatidylethanolamine from CDP-diacylglycerol: step 2/2. In terms of biological role, catalyzes the formation of phosphatidylethanolamine (PtdEtn) from phosphatidylserine (PtdSer). This is Phosphatidylserine decarboxylase proenzyme from Bacillus cereus (strain B4264).